The primary structure comprises 477 residues: P3 protein (477 aa).

The tract at residues 1-21 is disordered; the sequence is MVFRSGEGHSLQWPGPEGGTG. 8 helical membrane passes run 225–245, 253–273, 281–301, 320–340, 361–381, 383–403, 417–437, and 450–470; these read PMLLGLLGQFLVMPFYAFLMA, ALALGLIITCSSPGGGGSYLF, VTLAISMTFISTVAATGFLPL, VSKILGTLLFIAIPIAAGVVI, VLLLGGLFLAYRMGVFILAGV, LPIVLVGFTVPLVGLLVGYGL, VSIEVGVQNSLLALAMLQLSL, and FLVALSGTSEMLALVIGHFIY.

The protein belongs to the bile acid:sodium symporter (BASS) (TC 2.A.28) family.

The protein resides in the membrane. The ubiquitous expression and the conservation of the sequence in distant animal species suggest that the gene codes for a protein with housekeeping functions. The polypeptide is P3 protein (SLC10A3) (Bos taurus (Bovine)).